Reading from the N-terminus, the 181-residue chain is ATP synthase subunit delta (181 aa).

It belongs to the ATPase delta chain family. F-type ATPases have 2 components, F(1) - the catalytic core - and F(0) - the membrane proton channel. F(1) has five subunits: alpha(3), beta(3), gamma(1), delta(1), epsilon(1). F(0) has three main subunits: a(1), b(2) and c(10-14). The alpha and beta chains form an alternating ring which encloses part of the gamma chain. F(1) is attached to F(0) by a central stalk formed by the gamma and epsilon chains, while a peripheral stalk is formed by the delta and b chains.

The protein resides in the cell inner membrane. Functionally, f(1)F(0) ATP synthase produces ATP from ADP in the presence of a proton or sodium gradient. F-type ATPases consist of two structural domains, F(1) containing the extramembraneous catalytic core and F(0) containing the membrane proton channel, linked together by a central stalk and a peripheral stalk. During catalysis, ATP synthesis in the catalytic domain of F(1) is coupled via a rotary mechanism of the central stalk subunits to proton translocation. This protein is part of the stalk that links CF(0) to CF(1). It either transmits conformational changes from CF(0) to CF(1) or is implicated in proton conduction. This Mannheimia succiniciproducens (strain KCTC 0769BP / MBEL55E) protein is ATP synthase subunit delta.